A 130-amino-acid polypeptide reads, in one-letter code: Small ribosomal subunit protein uS8 (130 aa).

It belongs to the universal ribosomal protein uS8 family. As to quaternary structure, part of the 30S ribosomal subunit. Contacts proteins S5 and S12.

One of the primary rRNA binding proteins, it binds directly to 16S rRNA central domain where it helps coordinate assembly of the platform of the 30S subunit. The polypeptide is Small ribosomal subunit protein uS8 (Pseudomonas entomophila (strain L48)).